The sequence spans 127 residues: Glycine cleavage system H protein (127 aa).

The Lipoyl-binding domain occupies 24-106 (VVTVGVTFHA…YGAGWFFKLK (83 aa)). Lys-65 is modified (N6-lipoyllysine).

It belongs to the GcvH family. In terms of assembly, the glycine cleavage system is composed of four proteins: P, T, L and H. It depends on (R)-lipoate as a cofactor.

Its function is as follows. The glycine cleavage system catalyzes the degradation of glycine. The H protein shuttles the methylamine group of glycine from the P protein to the T protein. The protein is Glycine cleavage system H protein of Laribacter hongkongensis (strain HLHK9).